The following is a 248-amino-acid chain: 3-deoxy-manno-octulosonate cytidylyltransferase (248 aa).

It belongs to the KdsB family.

The protein localises to the cytoplasm. The catalysed reaction is 3-deoxy-alpha-D-manno-oct-2-ulosonate + CTP = CMP-3-deoxy-beta-D-manno-octulosonate + diphosphate. It functions in the pathway nucleotide-sugar biosynthesis; CMP-3-deoxy-D-manno-octulosonate biosynthesis; CMP-3-deoxy-D-manno-octulosonate from 3-deoxy-D-manno-octulosonate and CTP: step 1/1. It participates in bacterial outer membrane biogenesis; lipopolysaccharide biosynthesis. Functionally, activates KDO (a required 8-carbon sugar) for incorporation into bacterial lipopolysaccharide in Gram-negative bacteria. The protein is 3-deoxy-manno-octulosonate cytidylyltransferase of Chlorobium chlorochromatii (strain CaD3).